The chain runs to 127 residues: Fluoride-specific ion channel FluC 2 (127 aa).

Transmembrane regions (helical) follow at residues 4 to 24 (IIAI…LSLL), 31 to 51 (FWIT…ITNL), 62 to 82 (IVIG…TFTF), and 94 to 114 (VLAL…GLAG). Positions 72 and 75 each coordinate Na(+).

Belongs to the fluoride channel Fluc/FEX (TC 1.A.43) family.

The protein localises to the cell membrane. It carries out the reaction fluoride(in) = fluoride(out). With respect to regulation, na(+) is not transported, but it plays an essential structural role and its presence is essential for fluoride channel function. Fluoride-specific ion channel. Important for reducing fluoride concentration in the cell, thus reducing its toxicity. This is Fluoride-specific ion channel FluC 2 from Lactiplantibacillus plantarum (strain ATCC BAA-793 / NCIMB 8826 / WCFS1) (Lactobacillus plantarum).